The following is a 328-amino-acid chain: Versiconal hemiacetal acetate esterase (328 aa).

Residues 82 to 84 (HGG) carry the Involved in the stabilization of the negatively charged intermediate by the formation of the oxyanion hole motif. Residues serine 156, aspartate 260, and histidine 290 contribute to the active site.

This sequence belongs to the 'GDXG' lipolytic enzyme family.

The catalysed reaction is (2S,3S)-versiconal hemiacetal acetate + H2O = (2S-3S)-versiconal hemiacetal + acetate + H(+). It catalyses the reaction (3S)-versiconol acetate + H2O = (S)-versiconol + acetate + H(+). It functions in the pathway mycotoxin biosynthesis. Versiconal hemiacetal acetate esterase; part of the fragmented gene cluster that mediates the biosynthesis of dothistromin (DOTH), a polyketide toxin very similar in structure to the aflatoxin precursor, versicolorin B. The first step of the pathway is the conversion of acetate to norsolorinic acid (NOR) and requires the fatty acid synthase subunits hexA and hexB, as well as the polyketide synthase pksA. PksA combines a hexanoyl starter unit and 7 malonyl-CoA extender units to synthesize the precursor NOR. The hexanoyl starter unit is provided to the acyl-carrier protein (ACP) domain by the fungal fatty acid synthase hexA/hexB. The second step is the conversion of NOR to averantin (AVN) and requires the norsolorinic acid ketoreductase nor1, which catalyzes the dehydration of norsolorinic acid to form (1'S)-averantin. The cytochrome P450 monooxygenase avnA then catalyzes the hydroxylation of AVN to 5'hydroxyaverantin (HAVN). The next step is performed by adhA that transforms HAVN to averufin (AVF). Averufin might then be converted to hydroxyversicolorone by cypX and avfA. Hydroxyversicolorone is further converted versiconal hemiacetal acetate (VHA) by moxY. VHA is then the substrate for the versiconal hemiacetal acetate esterase est1 to yield versiconal (VAL). Versicolorin B synthase vbsA then converts VAL to versicolorin B (VERB) by closing the bisfuran ring. Then, the activity of the versicolorin B desaturase verB leads to versicolorin A (VERA). DotB, a predicted chloroperoxidase, may perform epoxidation of the A-ring of VERA. Alternatively, a cytochrome P450, such as cypX or avnA could catalyze this step. It is also possible that another, uncharacterized, cytochrome P450 enzyme is responsible for this step. Opening of the epoxide could potentially be achieved by the epoxide hydrolase epoA. However, epoA seems not to be required for DOTH biosynthesis, but other epoxide hydrolases may have the ability to complement this hydrolysis. Alternatively, opening of the epoxide ring could be achieved non-enzymatically. The next step is the deoxygenation of ring A to yield the 5,8-dihydroxyanthraquinone which is most likely catalyzed by the NADPH dehydrogenase encoded by ver1. The last stages of DOTH biosynthesis are proposed to involve hydroxylation of the bisfuran. OrdB and norB might have oxidative roles here. An alternative possibility is that cytochrome P450 monoogenases such as avnA and cypX might perform these steps in addition to previously proposed steps. This chain is Versiconal hemiacetal acetate esterase, found in Dothistroma septosporum (strain NZE10 / CBS 128990) (Red band needle blight fungus).